Reading from the N-terminus, the 226-residue chain is High affinity heme transporter (226 aa).

The N-terminal stretch at 1–20 (MISLKIYFVLIFLFLKGINS) is a signal peptide. The tract at residues 72–101 (CDTTILSETNNVTGSCYVANCANDTVLEIC) is heme binding. Serine 199 carries the GPI-anchor amidated serine lipid modification. Residues 200 to 226 (SASSTIFKPSYFISCLLSVGLYLVLNF) constitute a propeptide, removed in mature form.

The protein localises to the cell membrane. Its subcellular location is the vacuole membrane. Functionally, high affinity heme transporter involved in the assimilation of exogenous heme during conditions of low cellular iron. In Schizosaccharomyces pombe (strain 972 / ATCC 24843) (Fission yeast), this protein is High affinity heme transporter.